A 1401-amino-acid polypeptide reads, in one-letter code: DNA-directed RNA polymerase subunit beta' (1401 aa).

The Zn(2+) site is built by cysteine 70, cysteine 72, cysteine 85, and cysteine 88. Residues aspartate 460, aspartate 462, and aspartate 464 each coordinate Mg(2+). Cysteine 808, cysteine 882, cysteine 889, and cysteine 892 together coordinate Zn(2+).

This sequence belongs to the RNA polymerase beta' chain family. The RNAP catalytic core consists of 2 alpha, 1 beta, 1 beta' and 1 omega subunit. When a sigma factor is associated with the core the holoenzyme is formed, which can initiate transcription. It depends on Mg(2+) as a cofactor. The cofactor is Zn(2+).

It catalyses the reaction RNA(n) + a ribonucleoside 5'-triphosphate = RNA(n+1) + diphosphate. In terms of biological role, DNA-dependent RNA polymerase catalyzes the transcription of DNA into RNA using the four ribonucleoside triphosphates as substrates. The polypeptide is DNA-directed RNA polymerase subunit beta' (Legionella pneumophila (strain Lens)).